A 287-amino-acid polypeptide reads, in one-letter code: Phospholipase A and acyltransferase 5 (287 aa).

2 disordered regions span residues 48-72 (PKQI…ASSQ) and 86-138 (DRGL…SNQK). 2 stretches are compositionally biased toward polar residues: residues 49 to 72 (KQIS…ASSQ) and 128 to 138 (LKNQAAESNQK). Residues 144-257 (LIEIFRIGYE…LRYGVPRSQQ (114 aa)) form the LRAT domain. Active-site residues include H154 and H166. Catalysis depends on C241, which acts as the Acyl-thioester intermediate.

It belongs to the H-rev107 family. As to expression, expressed in testis.

It is found in the cytoplasm. The protein localises to the cytosol. It carries out the reaction a 1,2-diacyl-sn-glycero-3-phosphocholine + H2O = a 1-acyl-sn-glycero-3-phosphocholine + a fatty acid + H(+). The enzyme catalyses a 1,2-diacyl-sn-glycero-3-phosphocholine + H2O = a 2-acyl-sn-glycero-3-phosphocholine + a fatty acid + H(+). It catalyses the reaction 1-hexadecanoyl-2-(5Z,8Z,11Z,14Z-eicosatetraenoyl)-sn-glycero-3-phosphocholine + 1,2-di-(9Z-octadecenoyl)-sn-glycero-3-phosphoethanolamine = N-(5Z,8Z,11Z,14Z-eicosatetraenoyl)-1,2-di-(9Z-octadecenoyl)-sn-glycero-3-phosphoethanolamine + 1-hexadecanoyl-sn-glycero-3-phosphocholine + H(+). The catalysed reaction is 1,2-di-(9Z-octadecenoyl)-sn-glycero-3-phosphoethanolamine + 1,2-dihexadecanoyl-sn-glycero-3-phosphocholine = N-hexadecanoyl-1,2-di-(9Z-octadecenoyl)-sn-glycero-3-phosphoethanolamine + 1-hexadecanoyl-sn-glycero-3-phosphocholine + H(+). It carries out the reaction 1,2-di-(9Z-octadecenoyl)-sn-glycero-3-phosphoethanolamine + 1,2-dihexadecanoyl-sn-glycero-3-phosphocholine = N-hexadecanoyl-1,2-di-(9Z-octadecenoyl)-sn-glycero-3-phosphoethanolamine + 2-hexadecanoyl-sn-glycero-3-phosphocholine + H(+). The enzyme catalyses a 1,2-diacyl-sn-glycero-3-phosphoethanolamine + a 1,2-diacyl-sn-glycero-3-phosphocholine = an N-acyl-1,2-diacyl-sn-glycero-3-phosphoethanolamine + a 1-acyl-sn-glycero-3-phosphocholine + H(+). It catalyses the reaction a 1,2-diacyl-sn-glycero-3-phosphoethanolamine + a 1,2-diacyl-sn-glycero-3-phosphocholine = an N-acyl-1,2-diacyl-sn-glycero-3-phosphoethanolamine + a 2-acyl-sn-glycero-3-phosphocholine + H(+). The catalysed reaction is 1-hexadecanoyl-2-(9Z-octadecenoyl)-sn-glycero-3-phosphocholine + 1,2-di-(9Z-octadecenoyl)-sn-glycero-3-phosphoethanolamine = N,1,2-tri-(9Z-octadecenoyl)-sn-glycero-3-phosphoethanolamine + 1-hexadecanoyl-sn-glycero-3-phosphocholine + H(+). In terms of biological role, exhibits both phospholipase A1/2 and acyltransferase activities. Shows phospholipase A1 (PLA1) and A2 (PLA2) activity, catalyzing the calcium-independent release of fatty acids from the sn-1 or sn-2 position of glycerophospholipids. Shows N-acyltransferase activity, catalyzing the calcium-independent transfer of a fatty acyl group at the sn-1 position of phosphatidylcholine (PC) and other glycerophospholipids to the primary amine of phosphatidylethanolamine (PE), forming N-acylphosphatidylethanolamine (NAPE), which serves as precursor for N-acylethanolamines (NAEs). This chain is Phospholipase A and acyltransferase 5, found in Rattus norvegicus (Rat).